A 377-amino-acid polypeptide reads, in one-letter code: Chaperone protein DnaJ (377 aa).

The J domain occupies 5-70 (DYYQVLGVAK…QKRAAYDQYG (66 aa)). The CR-type zinc finger occupies 137–215 (GYDTQIRVPS…CHGAGKTKET (79 aa)). 8 residues coordinate Zn(2+): Cys-150, Cys-153, Cys-167, Cys-170, Cys-189, Cys-192, Cys-203, and Cys-206. CXXCXGXG motif repeat units lie at residues 150–157 (CEICHGSG), 167–174 (CPTCNGSG), 189–196 (CPKCHGTG), and 203–210 (CTHCHGAG).

Belongs to the DnaJ family. In terms of assembly, homodimer. Zn(2+) is required as a cofactor.

It localises to the cytoplasm. Participates actively in the response to hyperosmotic and heat shock by preventing the aggregation of stress-denatured proteins and by disaggregating proteins, also in an autonomous, DnaK-independent fashion. Unfolded proteins bind initially to DnaJ; upon interaction with the DnaJ-bound protein, DnaK hydrolyzes its bound ATP, resulting in the formation of a stable complex. GrpE releases ADP from DnaK; ATP binding to DnaK triggers the release of the substrate protein, thus completing the reaction cycle. Several rounds of ATP-dependent interactions between DnaJ, DnaK and GrpE are required for fully efficient folding. Also involved, together with DnaK and GrpE, in the DNA replication of plasmids through activation of initiation proteins. This is Chaperone protein DnaJ from Paraburkholderia phymatum (strain DSM 17167 / CIP 108236 / LMG 21445 / STM815) (Burkholderia phymatum).